Reading from the N-terminus, the 103-residue chain is Small ribosomal subunit protein uS10 (103 aa).

Belongs to the universal ribosomal protein uS10 family. In terms of assembly, part of the 30S ribosomal subunit.

Its function is as follows. Involved in the binding of tRNA to the ribosomes. This chain is Small ribosomal subunit protein uS10, found in Acetivibrio thermocellus (strain ATCC 27405 / DSM 1237 / JCM 9322 / NBRC 103400 / NCIMB 10682 / NRRL B-4536 / VPI 7372) (Clostridium thermocellum).